Reading from the N-terminus, the 171-residue chain is Adenine phosphoribosyltransferase (171 aa).

Belongs to the purine/pyrimidine phosphoribosyltransferase family. Homodimer.

It is found in the cytoplasm. The enzyme catalyses AMP + diphosphate = 5-phospho-alpha-D-ribose 1-diphosphate + adenine. The protein operates within purine metabolism; AMP biosynthesis via salvage pathway; AMP from adenine: step 1/1. Its function is as follows. Catalyzes a salvage reaction resulting in the formation of AMP, that is energically less costly than de novo synthesis. In Shouchella clausii (strain KSM-K16) (Alkalihalobacillus clausii), this protein is Adenine phosphoribosyltransferase.